Consider the following 228-residue polypeptide: Large ribosomal subunit protein bL25 (228 aa).

Residues 196–228 (EEAAVAEAQSAESAEGKAEAEAEATNEKNKSEA) form a disordered region. Positions 209 to 228 (AEGKAEAEAEATNEKNKSEA) are enriched in basic and acidic residues.

Belongs to the bacterial ribosomal protein bL25 family. CTC subfamily. In terms of assembly, part of the 50S ribosomal subunit; part of the 5S rRNA/L5/L18/L25 subcomplex. Contacts the 5S rRNA. Binds to the 5S rRNA independently of L5 and L18.

Functionally, this is one of the proteins that binds to the 5S RNA in the ribosome where it forms part of the central protuberance. In Methylorubrum extorquens (strain CM4 / NCIMB 13688) (Methylobacterium extorquens), this protein is Large ribosomal subunit protein bL25.